The sequence spans 156 residues: ATP synthase subunit b 1 (156 aa).

Residues 7–29 traverse the membrane as a helical segment; it reads LLGQAISFALFVWFCMKYVWPPL.

The protein belongs to the ATPase B chain family. In terms of assembly, F-type ATPases have 2 components, F(1) - the catalytic core - and F(0) - the membrane proton channel. F(1) has five subunits: alpha(3), beta(3), gamma(1), delta(1), epsilon(1). F(0) has three main subunits: a(1), b(2) and c(10-14). The alpha and beta chains form an alternating ring which encloses part of the gamma chain. F(1) is attached to F(0) by a central stalk formed by the gamma and epsilon chains, while a peripheral stalk is formed by the delta and b chains.

The protein localises to the cell inner membrane. Functionally, f(1)F(0) ATP synthase produces ATP from ADP in the presence of a proton or sodium gradient. F-type ATPases consist of two structural domains, F(1) containing the extramembraneous catalytic core and F(0) containing the membrane proton channel, linked together by a central stalk and a peripheral stalk. During catalysis, ATP synthesis in the catalytic domain of F(1) is coupled via a rotary mechanism of the central stalk subunits to proton translocation. Component of the F(0) channel, it forms part of the peripheral stalk, linking F(1) to F(0). In Vibrio campbellii (strain ATCC BAA-1116), this protein is ATP synthase subunit b 1.